Consider the following 530-residue polypeptide: Phosphoenolpyruvate carboxykinase (ATP) (530 aa).

Substrate is bound by residues arginine 60, tyrosine 195, and lysine 201. ATP-binding positions include lysine 201, histidine 221, and 237–245; that span reads GLSGTGKTT. Positions 201 and 221 each coordinate Mn(2+). Residue aspartate 258 coordinates Mn(2+). Residues glutamate 286, arginine 324, 443-444, and serine 449 contribute to the ATP site; that span reads RI. A substrate-binding site is contributed by arginine 324.

The protein belongs to the phosphoenolpyruvate carboxykinase (ATP) family. It depends on Mn(2+) as a cofactor.

The protein resides in the cytoplasm. It carries out the reaction oxaloacetate + ATP = phosphoenolpyruvate + ADP + CO2. Its pathway is carbohydrate biosynthesis; gluconeogenesis. Its function is as follows. Involved in the gluconeogenesis. Catalyzes the conversion of oxaloacetate (OAA) to phosphoenolpyruvate (PEP) through direct phosphoryl transfer between the nucleoside triphosphate and OAA. This chain is Phosphoenolpyruvate carboxykinase (ATP), found in Pelobacter propionicus (strain DSM 2379 / NBRC 103807 / OttBd1).